Consider the following 282-residue polypeptide: HMG box-containing protein R545 (282 aa).

The tract at residues 1–282 is disordered; it reads MPKKTATKAN…KKEASDEESD (282 aa). The segment covering 16–29 has biased composition (acidic residues); the sequence is DSENDSVVSEEEDN. Residues 70–87 are compositionally biased toward basic residues; it reads KGKVNAKKAPAKKAPVKK. Positions 93–121 are enriched in acidic residues; sequence DSDNEEDEASEDGSDDEEDVVSADDSDSD. The segment covering 127-153 has biased composition (basic residues); sequence KAAKKAPAKKAPAKKAPAKKAPAKKGK. Basic and acidic residues-rich tracts occupy residues 176–187 and 197–214; these read TKKDGDKPKKPL and RMPELREEEPGKPYKEYM. The segment at residues 183 to 252 is a DNA-binding region (HMG box); it reads PKKPLSDYQK…KAPAKGGSKS (70 aa). Basic residues predominate over residues 253 to 273; sequence TAKKAPAKKAPAKKAPAKKSK.

The protein is HMG box-containing protein R545 of Acanthamoeba polyphaga mimivirus (APMV).